A 282-amino-acid chain; its full sequence is 2-dehydro-3-deoxyphosphooctonate aldolase (282 aa).

It belongs to the KdsA family.

The protein resides in the cytoplasm. The catalysed reaction is D-arabinose 5-phosphate + phosphoenolpyruvate + H2O = 3-deoxy-alpha-D-manno-2-octulosonate-8-phosphate + phosphate. It participates in carbohydrate biosynthesis; 3-deoxy-D-manno-octulosonate biosynthesis; 3-deoxy-D-manno-octulosonate from D-ribulose 5-phosphate: step 2/3. The protein operates within bacterial outer membrane biogenesis; lipopolysaccharide biosynthesis. This is 2-dehydro-3-deoxyphosphooctonate aldolase from Shewanella sediminis (strain HAW-EB3).